The chain runs to 165 residues: LIM domain transcription factor LMO4 (165 aa).

LIM zinc-binding domains are found at residues cysteine 23–asparagine 83 and cysteine 87–asparagine 147.

In terms of assembly, interacts strongly with LDBS. Interacts with LDB2 and LDB1. Interaction with complexes consisting of at least LDB1 and LHX3 acts to disassemble the complex; may preferentially disassemble LDB1-LHX3 complexes rather than complexes consisting of LDB1, LHX3 and ISL1. Interacts (via the LIM zinc-binding domain 1) with RBBP8. Interacts with both RPPB8 and LDB1 through the same face and cannot bind to both proteins simultaneously. Interacts with BRCA1 (via the BRCT domains); the interaction represses BRCA1 transcriptional activity. Interacts with DEAF1; LMO4 blocks export from nucleus.

Its function is as follows. Transcription cofactor. Plays a role in establishing motor neuron identity, in concert with MNX1, acting, at least in part, to disrupt LDB1-LHX3 complexes thereby negatively modulating interneuron genes in motor neurons. This chain is LIM domain transcription factor LMO4 (LMO4), found in Bos taurus (Bovine).